Reading from the N-terminus, the 140-residue chain is Large ribosomal subunit protein uL11 (140 aa).

This sequence belongs to the universal ribosomal protein uL11 family. As to quaternary structure, part of the ribosomal stalk of the 50S ribosomal subunit. Interacts with L10 and the large rRNA to form the base of the stalk. L10 forms an elongated spine to which L12 dimers bind in a sequential fashion forming a multimeric L10(L12)X complex. In terms of processing, one or more lysine residues are methylated.

Functionally, forms part of the ribosomal stalk which helps the ribosome interact with GTP-bound translation factors. This chain is Large ribosomal subunit protein uL11, found in Desulfovibrio desulfuricans (strain ATCC 27774 / DSM 6949 / MB).